Here is a 169-residue protein sequence, read N- to C-terminus: ATP synthase subunit b (169 aa).

Residues 12-32 (HIYLGNALWYLICFAILLLLI) traverse the membrane as a helical segment.

Belongs to the ATPase B chain family. In terms of assembly, F-type ATPases have 2 components, F(1) - the catalytic core - and F(0) - the membrane proton channel. F(1) has five subunits: alpha(3), beta(3), gamma(1), delta(1), epsilon(1). F(0) has three main subunits: a(1), b(2) and c(10-14). The alpha and beta chains form an alternating ring which encloses part of the gamma chain. F(1) is attached to F(0) by a central stalk formed by the gamma and epsilon chains, while a peripheral stalk is formed by the delta and b chains.

Its subcellular location is the cell membrane. F(1)F(0) ATP synthase produces ATP from ADP in the presence of a proton or sodium gradient. F-type ATPases consist of two structural domains, F(1) containing the extramembraneous catalytic core and F(0) containing the membrane proton channel, linked together by a central stalk and a peripheral stalk. During catalysis, ATP synthesis in the catalytic domain of F(1) is coupled via a rotary mechanism of the central stalk subunits to proton translocation. Its function is as follows. Component of the F(0) channel, it forms part of the peripheral stalk, linking F(1) to F(0). In Lactobacillus helveticus (strain DPC 4571), this protein is ATP synthase subunit b.